Here is a 582-residue protein sequence, read N- to C-terminus: DNA mismatch repair protein MutL (582 aa).

This sequence belongs to the DNA mismatch repair MutL/HexB family.

This protein is involved in the repair of mismatches in DNA. It is required for dam-dependent methyl-directed DNA mismatch repair. May act as a 'molecular matchmaker', a protein that promotes the formation of a stable complex between two or more DNA-binding proteins in an ATP-dependent manner without itself being part of a final effector complex. The protein is DNA mismatch repair protein MutL of Chlamydia abortus (strain DSM 27085 / S26/3) (Chlamydophila abortus).